The following is a 140-amino-acid chain: Myrosinase 2 (140 aa).

Catalysis depends on Arg70, which acts as the Nucleophile. 2 N-linked (GlcNAc...) asparagine glycosylation sites follow: Asn114 and Asn127.

This sequence belongs to the glycosyl hydrolase 1 family. In terms of assembly, homodimer.

The catalysed reaction is a thioglucoside + H2O = a sugar + a thiol.. Its activity is regulated as follows. Inhibited by ascorbate. Functionally, degradation of glucosinolates (glucose residue linked by a thioglucoside bound to an amino acid derivative) to glucose, sulfate and any of the products: thiocyanates, isothiocyanates, nitriles, epithionitriles or oxazolidine-2-thiones. This chain is Myrosinase 2, found in Brevicoryne brassicae (Mealy cabbage aphid).